The sequence spans 429 residues: MPIIEQVRAREILDSRGNPTVEVEVALIDGTFARAAVPSGASTGEHEAVELRDGGDRYGGKGVQKAVQAVLDEIGPAVIGLNADDQRLVDQALVDLDGTPDKSRLGGNAILGVSLAVAKAAADSAELPLFRYVGGPNAHILPVPMMNILNGGAHADTAVDIQEFMVAPIGAPSFVEALRWGAEVYHALKSVLKKEGLSTGLGDEGGFAPDVAGTTAALDLISRAIESAGLRPGADVALALDAAATEFFTDGTGYVFEGTTRTADQMTEFYAGLLGAYPLVSIEDPLSEDDWDGWAALTASIGDRVQIVGDDIFVTNPERLEEGIERGVANALLVKVNQIGTLTETLDAVTLAHHGGYRTMISHRSGETEDTMIADLAVAIGSGQIKTGAPARSERVAKYNQLLRIEEALGDAARYAGDLAFPRFACETK.

Gln-162 contacts (2R)-2-phosphoglycerate. The Proton donor role is filled by Glu-204. Mg(2+) contacts are provided by Asp-241, Glu-283, and Asp-310. (2R)-2-phosphoglycerate contacts are provided by Lys-335, Arg-364, Ser-365, and Lys-386. The active-site Proton acceptor is Lys-335.

The protein belongs to the enolase family. Mg(2+) serves as cofactor.

Its subcellular location is the cytoplasm. The protein resides in the secreted. It localises to the cell surface. It catalyses the reaction (2R)-2-phosphoglycerate = phosphoenolpyruvate + H2O. It participates in carbohydrate degradation; glycolysis; pyruvate from D-glyceraldehyde 3-phosphate: step 4/5. Functionally, catalyzes the reversible conversion of 2-phosphoglycerate (2-PG) into phosphoenolpyruvate (PEP). It is essential for the degradation of carbohydrates via glycolysis. The sequence is that of Enolase from Mycobacterium tuberculosis (strain ATCC 25177 / H37Ra).